A 354-amino-acid polypeptide reads, in one-letter code: MRTQWVELGERSYPIYIGDGVLDQGVLAEHLVADRALLVSNETVAPLYAERLAVPGAEVQSVTLHDGERYKTLQTCEQVYDALIEGRFDRSATVIALGGGVVGDMAGFCAATYQRGVGYIQVPTTLLAQVDSSVGGKTGVNHPRGKNMIGAFHQPRAVVADTGVLATLPEREYNAGLAEVVKYGLIRDPAFFDWLEAHVDALRRRDPEALAHAVAESCRNKAEVVAADEREAGERALLNLGHTFGHAIETYTDYCTWLHGEAVAAGMVMAARMSVRLGWLQRNGLERTIALLEAFGLPTRPPAIPEARFRELMSVDKKNRGGQLRLVLLRSVGDAVVTGEFAPEALTDTLVEAV.

NAD(+)-binding positions include 66–71 (DGERYK), 100–104 (GVVGD), 124–125 (TT), Lys-137, and Lys-146. 3 residues coordinate Zn(2+): Glu-179, His-242, and His-259.

Belongs to the sugar phosphate cyclases superfamily. Dehydroquinate synthase family. Co(2+) is required as a cofactor. Requires Zn(2+) as cofactor. NAD(+) serves as cofactor.

It is found in the cytoplasm. The catalysed reaction is 7-phospho-2-dehydro-3-deoxy-D-arabino-heptonate = 3-dehydroquinate + phosphate. It functions in the pathway metabolic intermediate biosynthesis; chorismate biosynthesis; chorismate from D-erythrose 4-phosphate and phosphoenolpyruvate: step 2/7. Catalyzes the conversion of 3-deoxy-D-arabino-heptulosonate 7-phosphate (DAHP) to dehydroquinate (DHQ). This Halorhodospira halophila (strain DSM 244 / SL1) (Ectothiorhodospira halophila (strain DSM 244 / SL1)) protein is 3-dehydroquinate synthase.